A 414-amino-acid chain; its full sequence is Multifunctional CCA protein (414 aa).

2 residues coordinate ATP: G8 and R11. Residues G8 and R11 each coordinate CTP. E21 and D23 together coordinate Mg(2+). ATP contacts are provided by R91, R137, and R140. CTP-binding residues include R91, R137, and R140. The region spanning 228-329 (TGIHTLMTLA…LKLFDAIDVW (102 aa)) is the HD domain.

Belongs to the tRNA nucleotidyltransferase/poly(A) polymerase family. Bacterial CCA-adding enzyme type 1 subfamily. As to quaternary structure, monomer. Can also form homodimers and oligomers. Requires Mg(2+) as cofactor. Ni(2+) serves as cofactor.

It carries out the reaction a tRNA precursor + 2 CTP + ATP = a tRNA with a 3' CCA end + 3 diphosphate. The catalysed reaction is a tRNA with a 3' CCA end + 2 CTP + ATP = a tRNA with a 3' CCACCA end + 3 diphosphate. Catalyzes the addition and repair of the essential 3'-terminal CCA sequence in tRNAs without using a nucleic acid template. Adds these three nucleotides in the order of C, C, and A to the tRNA nucleotide-73, using CTP and ATP as substrates and producing inorganic pyrophosphate. tRNA 3'-terminal CCA addition is required both for tRNA processing and repair. Also involved in tRNA surveillance by mediating tandem CCA addition to generate a CCACCA at the 3' terminus of unstable tRNAs. While stable tRNAs receive only 3'-terminal CCA, unstable tRNAs are marked with CCACCA and rapidly degraded. The protein is Multifunctional CCA protein of Yersinia enterocolitica serotype O:8 / biotype 1B (strain NCTC 13174 / 8081).